A 250-amino-acid polypeptide reads, in one-letter code: Triosephosphate isomerase (250 aa).

9-11 (NWK) is a substrate binding site. Histidine 95 functions as the Electrophile in the catalytic mechanism. The active-site Proton acceptor is glutamate 167. Substrate contacts are provided by residues glycine 173, serine 213, and 234–235 (GG).

The protein belongs to the triosephosphate isomerase family. As to quaternary structure, homodimer.

Its subcellular location is the cytoplasm. The enzyme catalyses D-glyceraldehyde 3-phosphate = dihydroxyacetone phosphate. The protein operates within carbohydrate biosynthesis; gluconeogenesis. It participates in carbohydrate degradation; glycolysis; D-glyceraldehyde 3-phosphate from glycerone phosphate: step 1/1. Its function is as follows. Involved in the gluconeogenesis. Catalyzes stereospecifically the conversion of dihydroxyacetone phosphate (DHAP) to D-glyceraldehyde-3-phosphate (G3P). The protein is Triosephosphate isomerase of Flavobacterium johnsoniae (strain ATCC 17061 / DSM 2064 / JCM 8514 / BCRC 14874 / CCUG 350202 / NBRC 14942 / NCIMB 11054 / UW101) (Cytophaga johnsonae).